The chain runs to 327 residues: Methionyl-tRNA formyltransferase (327 aa).

121–124 (SLLP) contacts (6S)-5,6,7,8-tetrahydrofolate.

The protein belongs to the Fmt family.

The enzyme catalyses L-methionyl-tRNA(fMet) + (6R)-10-formyltetrahydrofolate = N-formyl-L-methionyl-tRNA(fMet) + (6S)-5,6,7,8-tetrahydrofolate + H(+). Its function is as follows. Attaches a formyl group to the free amino group of methionyl-tRNA(fMet). The formyl group appears to play a dual role in the initiator identity of N-formylmethionyl-tRNA by promoting its recognition by IF2 and preventing the misappropriation of this tRNA by the elongation apparatus. The polypeptide is Methionyl-tRNA formyltransferase (Burkholderia multivorans (strain ATCC 17616 / 249)).